Consider the following 178-residue polypeptide: Ribosome rescue factor SmrB (178 aa).

The Smr domain occupies 99 to 174 (LDLHGLTQMQ…GNAALLILIE (76 aa)).

It belongs to the SmrB family. Associates with collided ribosomes, but not with correctly translating polysomes.

Acts as a ribosome collision sensor. Detects stalled/collided disomes (pairs of ribosomes where the leading ribosome is stalled and a second ribosome has collided with it) and endonucleolytically cleaves mRNA at the 5' boundary of the stalled ribosome. Stalled/collided disomes form a new interface (primarily via the 30S subunits) that binds SmrB. Cleaved mRNA becomes available for tmRNA ligation, leading to ribosomal subunit dissociation and rescue of stalled ribosomes. The polypeptide is Ribosome rescue factor SmrB (Photorhabdus laumondii subsp. laumondii (strain DSM 15139 / CIP 105565 / TT01) (Photorhabdus luminescens subsp. laumondii)).